Reading from the N-terminus, the 311-residue chain is Aspartate carbamoyltransferase catalytic subunit (311 aa).

Carbamoyl phosphate contacts are provided by arginine 55 and threonine 56. Lysine 85 contacts L-aspartate. The carbamoyl phosphate site is built by arginine 106, histidine 135, and glutamine 138. L-aspartate contacts are provided by arginine 168 and arginine 230. Carbamoyl phosphate is bound by residues leucine 268 and proline 269.

Belongs to the aspartate/ornithine carbamoyltransferase superfamily. ATCase family. In terms of assembly, heterododecamer (2C3:3R2) of six catalytic PyrB chains organized as two trimers (C3), and six regulatory PyrI chains organized as three dimers (R2).

It carries out the reaction carbamoyl phosphate + L-aspartate = N-carbamoyl-L-aspartate + phosphate + H(+). It participates in pyrimidine metabolism; UMP biosynthesis via de novo pathway; (S)-dihydroorotate from bicarbonate: step 2/3. Functionally, catalyzes the condensation of carbamoyl phosphate and aspartate to form carbamoyl aspartate and inorganic phosphate, the committed step in the de novo pyrimidine nucleotide biosynthesis pathway. This is Aspartate carbamoyltransferase catalytic subunit from Escherichia fergusonii (strain ATCC 35469 / DSM 13698 / CCUG 18766 / IAM 14443 / JCM 21226 / LMG 7866 / NBRC 102419 / NCTC 12128 / CDC 0568-73).